Reading from the N-terminus, the 444-residue chain is Elongation factor 1-alpha (444 aa).

A tr-type G domain is found at Lys-14–Arg-235. The segment at Gly-23–Ser-30 is G1. Residue Gly-23 to Ser-30 coordinates GTP. Position 30 (Ser-30) interacts with Mg(2+). The G2 stretch occupies residues Gly-79–Glu-83. Residues Asp-100–Gly-103 are G3. Residues Asp-100 to His-104 and Asn-162 to Asp-165 each bind GTP. A G4 region spans residues Asn-162–Asp-165. The segment at Ser-201 to Val-203 is G5.

This sequence belongs to the TRAFAC class translation factor GTPase superfamily. Classic translation factor GTPase family. EF-Tu/EF-1A subfamily.

The protein localises to the cytoplasm. It catalyses the reaction GTP + H2O = GDP + phosphate + H(+). In terms of biological role, GTP hydrolase that promotes the GTP-dependent binding of aminoacyl-tRNA to the A-site of ribosomes during protein biosynthesis. The sequence is that of Elongation factor 1-alpha from Caldivirga maquilingensis (strain ATCC 700844 / DSM 13496 / JCM 10307 / IC-167).